The following is a 496-amino-acid chain: MQLVVKSTSPQTLKTATLVVAVGEGRKLGATAKAIDQAADGALSAALKRGDLAGKVGQTLLLHAVPNLKAERVLLVGAGKEGELSDRQFRKIAAATYGALKGLGGSDAALTLGELQVKGRDTYGKTRLLAETLLDATYAFDRFKSEKASAPVLKKLVLLCDKAGQAEVERAASHAQAIVDGMALTRDLGNLPPNLCHPTSLASEAKALAKTYDTLKVEVLDEKKLKELGMGAFLAVAQGSDQPPRLIVLDYQGGKKDEQPFVLVGKGITFDSGGISLKPGSGMDEMKYDMCGAASVLGTFRALLELALPINVVGLLACAENMPSGGATRPGDIVTSMSGQTVEILNTDAEGRLVLCDALTYAERFKPQAVIDIATLTGACITALGTQASGLMGNDDDLIRQVLEAGEHAADRAWQLPLFEEYQEQLDSPFADMANIGGPKAGTITAACFLSRFAKNYHWAHLDIAGTAWISGGKEKGATGRPVPLLTQFLLDRSAP.

Residues Lys-266 and Asp-271 each contribute to the Mn(2+) site. The active site involves Lys-278. 3 residues coordinate Mn(2+): Asp-289, Asp-348, and Glu-350. Arg-352 is an active-site residue.

It belongs to the peptidase M17 family. Mn(2+) is required as a cofactor.

It is found in the cytoplasm. It catalyses the reaction Release of an N-terminal amino acid, Xaa-|-Yaa-, in which Xaa is preferably Leu, but may be other amino acids including Pro although not Arg or Lys, and Yaa may be Pro. Amino acid amides and methyl esters are also readily hydrolyzed, but rates on arylamides are exceedingly low.. The enzyme catalyses Release of an N-terminal amino acid, preferentially leucine, but not glutamic or aspartic acids.. In terms of biological role, presumably involved in the processing and regular turnover of intracellular proteins. Catalyzes the removal of unsubstituted N-terminal amino acids from various peptides. This chain is Probable cytosol aminopeptidase, found in Azotobacter vinelandii (strain DJ / ATCC BAA-1303).